Consider the following 121-residue polypeptide: MLSQVATPDECLRCGACCAHFRVSFYWAEAELMEEHLVEPLTPVYSCMRGTNQPEPRCQALTGEIGKEVGCSIYAVRSSTCREVQIADEQCNKARLAHQLIPLIQVSPADSENDHDYDQVS.

This sequence to E.coli YkgJ.

The chain is Putative ferredoxin from Acinetobacter calcoaceticus.